The chain runs to 220 residues: Large ribosomal subunit protein bL9 (220 aa).

Positions Ala167–Asp184 are enriched in low complexity. The interval Ala167 to Thr220 is disordered. A compositionally biased stretch (acidic residues) spans Ala211–Thr220.

Belongs to the bacterial ribosomal protein bL9 family.

Its function is as follows. Binds to the 23S rRNA. This is Large ribosomal subunit protein bL9 from Anaplasma marginale (strain Florida).